The chain runs to 422 residues: 3-phosphoshikimate 1-carboxyvinyltransferase (422 aa).

3-phosphoshikimate is bound by residues lysine 24, serine 25, and arginine 29. Lysine 24 serves as a coordination point for phosphoenolpyruvate. Positions 93 and 121 each coordinate phosphoenolpyruvate. 3-phosphoshikimate-binding residues include serine 164, serine 165, glutamine 166, glutamate 308, and histidine 335. Phosphoenolpyruvate is bound at residue glutamine 166. Glutamate 308 (proton acceptor) is an active-site residue. Residues arginine 339, arginine 380, and lysine 405 each contribute to the phosphoenolpyruvate site.

The protein belongs to the EPSP synthase family. Monomer.

It localises to the cytoplasm. The catalysed reaction is 3-phosphoshikimate + phosphoenolpyruvate = 5-O-(1-carboxyvinyl)-3-phosphoshikimate + phosphate. It functions in the pathway metabolic intermediate biosynthesis; chorismate biosynthesis; chorismate from D-erythrose 4-phosphate and phosphoenolpyruvate: step 6/7. In terms of biological role, catalyzes the transfer of the enolpyruvyl moiety of phosphoenolpyruvate (PEP) to the 5-hydroxyl of shikimate-3-phosphate (S3P) to produce enolpyruvyl shikimate-3-phosphate and inorganic phosphate. The protein is 3-phosphoshikimate 1-carboxyvinyltransferase of Saccharopolyspora erythraea (strain ATCC 11635 / DSM 40517 / JCM 4748 / NBRC 13426 / NCIMB 8594 / NRRL 2338).